The following is a 64-amino-acid chain: Large ribosomal subunit protein bL35 (64 aa).

Belongs to the bacterial ribosomal protein bL35 family.

This chain is Large ribosomal subunit protein bL35, found in Streptomyces coelicolor (strain ATCC BAA-471 / A3(2) / M145).